We begin with the raw amino-acid sequence, 329 residues long: Protein RecA (329 aa).

Residue 63 to 70 coordinates ATP; the sequence is GNESSGKT.

It belongs to the RecA family.

It is found in the cytoplasm. Functionally, can catalyze the hydrolysis of ATP in the presence of single-stranded DNA, the ATP-dependent uptake of single-stranded DNA by duplex DNA, and the ATP-dependent hybridization of homologous single-stranded DNAs. It interacts with LexA causing its activation and leading to its autocatalytic cleavage. The protein is Protein RecA of Malacoplasma penetrans (strain HF-2) (Mycoplasma penetrans).